The primary structure comprises 310 residues: 300 kDa antigen AG231 (310 aa).

Residues 1-23 (VTGSCVVTGSCVVTDSCVVTGSC) are 4 X 6 AA tandem repeats of V-V-T-G-S-C. A 13 X 6 AA tandem repeats of V-V-[TI]-[QE]-E-[PH] region spans residues 29 to 106 (VTTQESVTTQ…TQEPVTVEEH (78 aa)). The span at 53–101 (VTIEEPVTTQEPVTIEEPVTTQEPVTTQEPVTTQEPVTTQEPVTTQEPV) shows a compositional bias: low complexity. Positions 53 to 310 (VTIEEPVTTQ…FGRGNKNDKK (258 aa)) are disordered. Composition is skewed to basic and acidic residues over residues 103–114 (VEEHIDEKKGSE) and 147–160 (NKND…KKPS). Residues 107–152 (IDEKKGSEGDNISLSSLSEETEEKSHTKKKKSSWLKFGRGNKNDKK) form a 45 AA repeat 1 repeat. Over residues 176 to 190 (TDSQISVNAQDSVTI) the composition is skewed to polar residues. Positions 188-265 (VTIQEPTATQ…TQEPSTTQEH (78 aa)) are 13 X 6 AA approximate tandem repeats. Low complexity predominate over residues 191-235 (QEPTATQEPPTTQELTATQEPTTTQETVTEQEPTTTQETVTAQEP). Polar residues predominate over residues 236-263 (ITTQEPVTAQEPVTTQELIATQEPSTTQ). Residues 264–273 (EHADEKKASE) are compositionally biased toward basic and acidic residues. Residues 266–310 (ADEKKASEGDNISLSRLSEETEEKSHTKKKSSWLKFGRGNKNDKK) form a 45 AA repeat 2 repeat.

The chain is 300 kDa antigen AG231 (FIRA) from Plasmodium falciparum (isolate FC27 / Papua New Guinea).